A 188-amino-acid chain; its full sequence is Methionine aminopeptidase (188 aa).

H60 provides a ligand contact to substrate. 3 residues coordinate a divalent metal cation: D80, D91, and H164. Position 172 (H172) interacts with substrate.

Belongs to the peptidase M24A family. Methionine aminopeptidase archaeal type 2 subfamily. As to quaternary structure, monomer. It depends on Co(2+) as a cofactor. Requires Zn(2+) as cofactor. Mn(2+) serves as cofactor. The cofactor is Fe(2+).

The catalysed reaction is Release of N-terminal amino acids, preferentially methionine, from peptides and arylamides.. Removes the N-terminal methionine from nascent proteins. The N-terminal methionine is often cleaved when the second residue in the primary sequence is small and uncharged (Met-Ala-, Cys, Gly, Pro, Ser, Thr, or Val). The protein is Methionine aminopeptidase (map) of Methanothermus fervidus.